We begin with the raw amino-acid sequence, 264 residues long: DNA repair protein RecO (264 aa).

The protein belongs to the RecO family.

Involved in DNA repair and RecF pathway recombination. This Chlorobium luteolum (strain DSM 273 / BCRC 81028 / 2530) (Pelodictyon luteolum) protein is DNA repair protein RecO.